The primary structure comprises 333 residues: Adenosine deaminase (333 aa).

Zn(2+) is bound by residues His-12 and His-14. Positions 14, 16, and 170 each coordinate substrate. His-197 serves as a coordination point for Zn(2+). Residue Glu-200 is the Proton donor of the active site. Residue Asp-278 participates in Zn(2+) binding. Asp-279 contributes to the substrate binding site.

Belongs to the metallo-dependent hydrolases superfamily. Adenosine and AMP deaminases family. Adenosine deaminase subfamily. It depends on Zn(2+) as a cofactor.

The enzyme catalyses adenosine + H2O + H(+) = inosine + NH4(+). It carries out the reaction 2'-deoxyadenosine + H2O + H(+) = 2'-deoxyinosine + NH4(+). In terms of biological role, catalyzes the hydrolytic deamination of adenosine and 2-deoxyadenosine. This chain is Adenosine deaminase, found in Salmonella gallinarum (strain 287/91 / NCTC 13346).